We begin with the raw amino-acid sequence, 432 residues long: Transcriptional adapter 3 (432 aa).

Residue lysine 21 forms a Glycyl lysine isopeptide (Lys-Gly) (interchain with G-Cter in SUMO2) linkage. Positions 40–69 (IEELDTLQLELETLLSSASRRLRVLEAETQ) form a coiled coil. Positions 87–127 (GRDHELGAPPKHGKPKKQKLEGKTGHGPGPGPGRPKSKNVQ) are disordered. A Glycyl lysine isopeptide (Lys-Gly) (interchain with G-Cter in SUMO2) cross-link involves residue lysine 129. Residues 272-319 (NIISPMEDSPIPDMSGKESGADGASTSPRNQNKPFSVPHTKSLESRIK) are disordered. A phosphoserine mark is found at serine 280 and serine 298. Polar residues predominate over residues 295–305 (ASTSPRNQNKP). Residues 367–407 (LLRLAKEEVSRQELRQRVRMADNEVMDAFRKIMAARQKKRT) are a coiled coil. Lysine 418 carries the post-translational modification N6-acetyllysine.

It belongs to the NGG1 family. As to quaternary structure, the PCAF complex is composed of a number of TBP-associated factors (TAFS), such as TAF5, TAF5L, TAF6, TAF6L, TAF9, TAF10 and TAF12, PCAF, and also PCAF-associated factors (PAFs), such as TADA2L/ADA2, TADA3L/ADA3 and SPT3. Interacts directly with TADA2L and PCAF and also with the high-risk HPV oncoprotein E6. Component of the STAGA transcription coactivator-HAT complex, at least composed of SUPT3H, GCN5L2, TAF5L, TAF6L, SUPT7L, TADA3L, TAD1L, TAF10, TAF12, TRRAP and TAF9. Component of the TFTC-HAT complex. Component of the ADA2A-containing complex (ATAC), composed of KAT14, KAT2A, TADA2L, TADA3L, ZZ3, MBIP, WDR5, YEATS2, CCDC101 and DR1.

The protein localises to the nucleus. Functions as a component of the PCAF complex. The PCAF complex is capable of efficiently acetylating histones in a nucleosomal context. The PCAF complex could be considered as the human version of the yeast SAGA complex. Also known as a coactivator for p53/TP53-dependent transcriptional activation. Component of the ATAC complex, a complex with histone acetyltransferase activity on histones H3 and H4. The protein is Transcriptional adapter 3 (Tada3) of Mus musculus (Mouse).